The sequence spans 1488 residues: Chromosome partition protein MukB (1488 aa).

34 to 41 (GGNGAGKS) contributes to the ATP binding site. Coiled coils occupy residues 326 to 418 (LEAD…QYNQ), 444 to 472 (LDTF…QTAH), and 509 to 602 (RHLA…QRAP). The tract at residues 666 to 783 (PGGAEDQRLN…SLPIFGRAAR (118 aa)) is flexible hinge. Coiled coils occupy residues 835–923 (EAEI…AKLE), 977–1116 (EMLS…AKAG), and 1209–1265 (VEAI…LQSV). The disordered stretch occupies residues 1049–1074 (ADSGAEERARQRRDELHAQLSNNRSR). Basic and acidic residues predominate over residues 1051–1065 (SGAEERARQRRDELH).

This sequence belongs to the SMC family. MukB subfamily. In terms of assembly, homodimerization via its hinge domain. Binds to DNA via its C-terminal region. Interacts, and probably forms a ternary complex, with MukE and MukF via its C-terminal region. The complex formation is stimulated by calcium or magnesium. Interacts with tubulin-related protein FtsZ.

The protein localises to the cytoplasm. The protein resides in the nucleoid. Functionally, plays a central role in chromosome condensation, segregation and cell cycle progression. Functions as a homodimer, which is essential for chromosome partition. Involved in negative DNA supercoiling in vivo, and by this means organize and compact chromosomes. May achieve or facilitate chromosome segregation by condensation DNA from both sides of a centrally located replisome during cell division. The polypeptide is Chromosome partition protein MukB (Salmonella arizonae (strain ATCC BAA-731 / CDC346-86 / RSK2980)).